We begin with the raw amino-acid sequence, 151 residues long: Flagellar assembly factor FliW (151 aa).

Belongs to the FliW family. As to quaternary structure, interacts with translational regulator CsrA and flagellin(s).

The protein resides in the cytoplasm. Acts as an anti-CsrA protein, binds CsrA and prevents it from repressing translation of its target genes, one of which is flagellin. Binds to flagellin and participates in the assembly of the flagellum. The polypeptide is Flagellar assembly factor FliW (Halalkalibacterium halodurans (strain ATCC BAA-125 / DSM 18197 / FERM 7344 / JCM 9153 / C-125) (Bacillus halodurans)).